A 141-amino-acid polypeptide reads, in one-letter code: ATP synthase F(0) complex subunit C2, mitochondrial (141 aa).

Residues 1–66 constitute a mitochondrion transit peptide; sequence MFACSKFVST…RSFQTSAISR (66 aa). The chain crosses the membrane as a helical span at residues 82 to 102; it reads VGVAGSGAGIGTVFGSLIIGY. N6,N6,N6-trimethyllysine is present on Lys-109. Residues 117–137 form a helical membrane-spanning segment; sequence ILGFALSEAMGLFCLMVAFLI.

The protein belongs to the ATPase C chain family. In terms of assembly, F-type ATPases have 2 components, CF(1) - the catalytic core - and CF(0) - the membrane proton channel. CF(1) has five subunits: alpha(3), beta(3), gamma(1), delta(1), epsilon(1). CF(0) has three main subunits: a, b and c. Interacts with DNAJC30; interaction is direct. Trimethylated by ATPSCKMT at Lys-109. Methylation is required for proper incorporation of the C subunit into the ATP synthase complex and mitochondrial respiration.

Its subcellular location is the mitochondrion membrane. Functionally, mitochondrial membrane ATP synthase (F(1)F(0) ATP synthase or Complex V) produces ATP from ADP in the presence of a proton gradient across the membrane which is generated by electron transport complexes of the respiratory chain. F-type ATPases consist of two structural domains, F(1) - containing the extramembraneous catalytic core and F(0) - containing the membrane proton channel, linked together by a central stalk and a peripheral stalk. During catalysis, ATP synthesis in the catalytic domain of F(1) is coupled via a rotary mechanism of the central stalk subunits to proton translocation. Part of the complex F(0) domain. A homomeric c-ring of probably 10 subunits is part of the complex rotary element. The protein is ATP synthase F(0) complex subunit C2, mitochondrial of Homo sapiens (Human).